Consider the following 119-residue polypeptide: Large ribosomal subunit protein bL19 (119 aa).

This sequence belongs to the bacterial ribosomal protein bL19 family.

Functionally, this protein is located at the 30S-50S ribosomal subunit interface and may play a role in the structure and function of the aminoacyl-tRNA binding site. This Borreliella afzelii (strain PKo) (Borrelia afzelii) protein is Large ribosomal subunit protein bL19.